The primary structure comprises 709 residues: Polyribonucleotide nucleotidyltransferase (709 aa).

Mg(2+)-binding residues include aspartate 485 and aspartate 491. In terms of domain architecture, KH spans 552 to 611; the sequence is PRIHTMKIDPKKIKDVIGKGGATIRALTEETGTSIDIDDDGTVKIAATDNNAAKRVMERI. In terms of domain architecture, S1 motif spans 621–689; sequence NAIYKGKVTR…RQGRIRLTMK (69 aa).

The protein belongs to the polyribonucleotide nucleotidyltransferase family. Component of the RNA degradosome, which is a multiprotein complex involved in RNA processing and mRNA degradation. It depends on Mg(2+) as a cofactor.

Its subcellular location is the cytoplasm. The catalysed reaction is RNA(n+1) + phosphate = RNA(n) + a ribonucleoside 5'-diphosphate. Its function is as follows. Involved in mRNA degradation. Catalyzes the phosphorolysis of single-stranded polyribonucleotides processively in the 3'- to 5'-direction. In Glaesserella parasuis serovar 5 (strain SH0165) (Haemophilus parasuis), this protein is Polyribonucleotide nucleotidyltransferase.